Consider the following 201-residue polypeptide: Small ribosomal subunit protein uS4c (201 aa).

An S4 RNA-binding domain is found at Met89–Asn150.

This sequence belongs to the universal ribosomal protein uS4 family. Part of the 30S ribosomal subunit. Contacts protein S5. The interaction surface between S4 and S5 is involved in control of translational fidelity.

The protein resides in the plastid. It is found in the chloroplast. One of the primary rRNA binding proteins, it binds directly to 16S rRNA where it nucleates assembly of the body of the 30S subunit. Its function is as follows. With S5 and S12 plays an important role in translational accuracy. This is Small ribosomal subunit protein uS4c (rps4) from Acorus calamus (Sweet flag).